A 461-amino-acid polypeptide reads, in one-letter code: MKKIAVIGTGYVGLVSGTCFAEIGNKVVCCDIDESKIRSLKNGVIPIYEPGLADLVEKNVLDQRLTFTNDIPSAIRASDIIYIAVGTPMSKTGEADLTYVKAAAKTIGEHLNGYKVIVNKSTVPVGTGKLVQSIVQKASKGRYSFDVVSNPEFLREGSAIHDTMNMERAVIGSTSHKAAAIIEELHQPFHAPVIKTNLESAEMIKYAANAFLATKISFINDIANICERVGADVSKVADGVGLDSRIGRKFLKAGIGFGGSCFPKDTTALLQIAKSAGYPFKLIEAVIETNEKQRVHIVDKLLTVMGSVKGRTISVLGLAFKPNTNDVRSAPALDIIPMLQQLGAHVKAYDPIAIPEASAILGEQVEYYTDVYAAMEDTDACLILTDWPEVKEMELVKVKTLLKQPVIIDGRNLFSLEEMQAAGYIYHSIGRPAVRGTEPSDKYFPGLPLEELAKDLGSVNL.

Residues 3–20 (KIAV…GTCF), valine 12, aspartate 31, lysine 36, threonine 122, and glutamate 156 contribute to the NAD(+) site. Substrate-binding positions include 152-156 (EFLRE), lysine 205, asparagine 209, 250-254 (FLKAG), and glycine 258. Cysteine 261 acts as the Nucleophile in catalysis. Residue lysine 264 coordinates NAD(+). Lysine 321 lines the substrate pocket. Arginine 328 contributes to the NAD(+) binding site.

This sequence belongs to the UDP-glucose/GDP-mannose dehydrogenase family. Post-translationally, phosphorylated by YwqD and dephosphorylated by YwqE in vitro.

It localises to the cytoplasm. It catalyses the reaction UDP-alpha-D-glucose + 2 NAD(+) + H2O = UDP-alpha-D-glucuronate + 2 NADH + 3 H(+). Its pathway is nucleotide-sugar biosynthesis; UDP-alpha-D-glucuronate biosynthesis; UDP-alpha-D-glucuronate from UDP-alpha-D-glucose: step 1/1. Activated by phosphorylation; inhibited by dephosphorylation. In terms of biological role, catalyzes the conversion of UDP-glucose into UDP-glucuronate, one of the precursors of teichuronic acid. The chain is UDP-glucose 6-dehydrogenase TuaD (tuaD) from Bacillus subtilis (strain 168).